The chain runs to 1667 residues: Androglobin (1667 aa).

A compositionally biased stretch (basic residues) spans 1–11 (MASKQTKKKEV). 3 disordered regions span residues 1–45 (MASK…KGKF), 347–387 (SLTT…KFSL), and 540–566 (GSDLPSVSETDETATHSQTDLSQITKA). The Calpain catalytic domain maps to 70–411 (KDKTGKSPVF…SLSDCSSAIQ (342 aa)). Over residues 353–384 (APEKSDKVPKEKADARDIGKKRSKDGEKEKFK) the composition is skewed to basic and acidic residues. Positions 554 to 566 (THSQTDLSQITKA) are enriched in polar residues. One can recognise a Globin; C-terminal part domain in the interval 763–890 (HICSMVSFVI…EEVSLVEWLD (128 aa)). Q792 and H824 together coordinate heme b. Residues 906–935 (EVAAAIKIQAMWRGTYVRLLMKARIPDTKE) form the IQ domain. The Globin; N-terminal part domain maps to 936-968 (NISVADTLQKVWAVLEMNLEQYAVSLLRLMFKS). 2 disordered regions span residues 1297 to 1355 (INLG…QQED) and 1420 to 1522 (TSDA…RSPT). Over residues 1301–1315 (SPDSHTISEGQKSSV) the composition is skewed to polar residues. Composition is skewed to basic and acidic residues over residues 1325-1340 (EKSSEKEKTAKEKQAP) and 1433-1450 (TKPKEEVETAARGVKEPN). A compositionally biased stretch (polar residues) spans 1451 to 1468 (SKNSAGSESKEMTQTGSG). Residues 1487 to 1498 (STSSESGGVSSP) are compositionally biased toward low complexity. Positions 1499–1511 (GKEEREQSTRKEN) are enriched in basic and acidic residues. Residues 1512–1522 (IQTGPRTRSPT) are compositionally biased toward polar residues. Positions 1588 to 1629 (QEERLKLKDEVLDMYKEMQDSLDEARQKIFDIREEYRNKLLE) form a coiled coil. Positions 1646–1667 (KLETEKMTPAPDTQKKKKGKKK) are disordered.

In the central section; belongs to the globin family. This sequence in the N-terminal section; belongs to the peptidase C2 family. As to quaternary structure, interacts with septin SEPT10; contributes to in vitro proteolytic cleavage of SEPT10 in a calmodulin-dependent manner. Interacts with CFAP69. Interacts with SPEF2. May interact with calmodulin.

It is found in the cell projection. It localises to the cilium. The protein resides in the flagellum. Its function is as follows. Probable chimeric globin with a bis-histidyl six-coordinate heme-iron atom through which it could bind dioxygen, carbon monoxide and nitric oxide. Required for sperm flagellum formation and maturation of elongating spermatids, thus playing an essential role in male fertility. In Homo sapiens (Human), this protein is Androglobin.